The chain runs to 155 residues: MLKQVEIFTDGSCLGNPGPGGYGAIMRYRQHEKTFSAGYRLTTNNRMELMAAIVALEALKEHCEVVLSTDSQYVRQGITQWIHNWKKRGWKTAEKKPVKNVDLWQRLDAALGQHKIKWEWVKGHAGHPENERCDELARAAASHPTLDDVGYLPES.

One can recognise an RNase H type-1 domain in the interval 1–142 (MLKQVEIFTD…CDELARAAAS (142 aa)). Positions 10, 48, 70, and 134 each coordinate Mg(2+).

Belongs to the RNase H family. In terms of assembly, monomer. Requires Mg(2+) as cofactor.

Its subcellular location is the cytoplasm. It catalyses the reaction Endonucleolytic cleavage to 5'-phosphomonoester.. Functionally, endonuclease that specifically degrades the RNA of RNA-DNA hybrids. In Klebsiella pneumoniae subsp. pneumoniae (strain ATCC 700721 / MGH 78578), this protein is Ribonuclease H.